The primary structure comprises 176 residues: Dual specificity phosphatase 28 (176 aa).

The Tyrosine-protein phosphatase domain occupies 17 to 159 (PPLVRVAPSL…LQKYEEALQA (143 aa)). The Phosphocysteine intermediate role is filled by C103.

This sequence belongs to the protein-tyrosine phosphatase family. Non-receptor class dual specificity subfamily. In terms of assembly, monomer.

It catalyses the reaction O-phospho-L-tyrosyl-[protein] + H2O = L-tyrosyl-[protein] + phosphate. The enzyme catalyses O-phospho-L-seryl-[protein] + H2O = L-seryl-[protein] + phosphate. The catalysed reaction is O-phospho-L-threonyl-[protein] + H2O = L-threonyl-[protein] + phosphate. Functionally, has phosphatase activity with the synthetic substrate 6,8-difluoro-4-methylumbelliferyl phosphate (in vitro). Has almost no detectable activity with phosphotyrosine, even less activity with phosphothreonine and displays complete lack of activity with phosphoserine. The poor activity with phosphotyrosine may be due to steric hindrance by bulky amino acid sidechains that obstruct access to the active site. The polypeptide is Dual specificity phosphatase 28 (DUSP28) (Homo sapiens (Human)).